The chain runs to 245 residues: Phosducin (245 aa).

The tract at residues 1–67 is disordered; sequence MEEARRQSLE…SRDDKDSKER (67 aa). In terms of domain architecture, Phosducin spans 1–241; that stretch reads MEEARRQSLE…IHALEQTSME (241 aa). Basic and acidic residues predominate over residues 58-67; the sequence is SRDDKDSKER. Serine 73 carries the post-translational modification Phosphoserine; by PKA. Residues 111-245 form a thioredoxin fold region; that stretch reads YGFVYELETG…EQTSMEEDVE (135 aa).

The protein belongs to the phosducin family. In terms of assembly, forms a complex with the beta and gamma subunits of the GTP-binding protein, transducin. Interacts with CRX. In terms of processing, light-induced changes in cyclic nucleotide levels modulate the phosphorylation of this protein by cAMP kinase.

The protein resides in the cytoplasm. It is found in the cytosol. Its subcellular location is the nucleus. The protein localises to the cell projection. It localises to the cilium. The protein resides in the photoreceptor outer segment. It is found in the photoreceptor inner segment. May participate in the regulation of visual phototransduction or in the integration of photoreceptor metabolism. Inhibits the transcriptional activation activity of the cone-rod homeobox CRX. The protein is Phosducin (PDC) of Equus caballus (Horse).